A 604-amino-acid polypeptide reads, in one-letter code: Asparagine synthetase [glutamine-hydrolyzing] 1 (604 aa).

The active-site Nucleophile is the Cys-2. Residues 2-186 (CGILAVLGAA…PGHLYSSAAG (185 aa)) form the Glutamine amidotransferase type-2 domain. L-glutamine-binding positions include 50–54 (RLAIV), 75–77 (NGE), and Asp-99. The region spanning 211–451 (LREAFEKAVI…LPKHILYRQK (241 aa)) is the Asparagine synthetase domain. ATP-binding positions include Leu-232, Val-268, and 342–343 (SG).

It carries out the reaction L-aspartate + L-glutamine + ATP + H2O = L-asparagine + L-glutamate + AMP + diphosphate + H(+). It participates in amino-acid biosynthesis; L-asparagine biosynthesis. Its function is as follows. Essential for nitrogen assimilation, distribution and remobilization within the plant via the phloem. The polypeptide is Asparagine synthetase [glutamine-hydrolyzing] 1 (Oryza sativa subsp. japonica (Rice)).